We begin with the raw amino-acid sequence, 229 residues long: Large ribosomal subunit protein uL1 (229 aa).

This sequence belongs to the universal ribosomal protein uL1 family. In terms of assembly, part of the 50S ribosomal subunit.

Functionally, binds directly to 23S rRNA. The L1 stalk is quite mobile in the ribosome, and is involved in E site tRNA release. Its function is as follows. Protein L1 is also a translational repressor protein, it controls the translation of the L11 operon by binding to its mRNA. The protein is Large ribosomal subunit protein uL1 of Chlorobium chlorochromatii (strain CaD3).